The primary structure comprises 254 residues: MTVEERSNTAKVDILGVDFDNTTMLQMVENIKTFFANQSTNNLFIVTANPEIVNYATTHQAYLELINQASYIVADGTGVVKASHRLKQPLAHRIPGIELMDECLKIAHVNHQKVFLLGATNEVVEAAQYALQQRYPNISFAHHHGYIDLEDETVVKRIKLFKPDYIFVGMGFPKQEEWIMTHENQFESTVMMGVGGSLEVFAGAKKRAPYIFRKLNIEWIYRALIDWKRIGRLKSIPIFMYKIAKAKRKIKKAK.

The protein belongs to the glycosyltransferase 26 family. TagA/TarA subfamily.

The catalysed reaction is UDP-N-acetyl-alpha-D-mannosamine + N-acetyl-alpha-D-glucosaminyl-di-trans,octa-cis-undecaprenyl diphosphate = N-acetyl-beta-D-mannosaminyl-(1-&gt;4)-N-acetyl-alpha-D-glucosaminyl di-trans,octa-cis-undecaprenyl diphosphate + UDP + H(+). It functions in the pathway cell wall biogenesis; poly(ribitol phosphate) teichoic acid biosynthesis. In terms of biological role, catalyzes the conversion of GlcNAc-PP-undecaprenol into ManNAc-GlcNAc-PP-undecaprenol, the first committed lipid intermediate in the de novo synthesis of teichoic acid. This is N-acetylglucosaminyldiphosphoundecaprenol N-acetyl-beta-D-mannosaminyltransferase from Staphylococcus aureus (strain NCTC 8325 / PS 47).